Reading from the N-terminus, the 246-residue chain is Probable transcriptional regulatory protein CLD_1467 (246 aa).

The protein belongs to the TACO1 family.

The protein localises to the cytoplasm. The protein is Probable transcriptional regulatory protein CLD_1467 of Clostridium botulinum (strain Okra / Type B1).